The primary structure comprises 518 residues: Centromere protein T (518 aa).

A disordered region spans residues 1–70; that stretch reads MADLSSPDGD…RKHSHGTGSV (70 aa). Positions 19–28 are enriched in basic and acidic residues; that stretch reads HVLDTADSHT. Positions 34 to 57 are enriched in polar residues; the sequence is STQTNPQRRRSQTPYSKRQGSQRK. Phosphothreonine is present on Thr-86. The segment at 94-381 is flexible stalk domain; sequence ILLTAPESST…EPHQLFEPPP (288 aa). Disordered stretches follow at residues 102 to 156, 271 to 362, and 375 to 412; these read STVM…KRKQ, VHHS…ELSS, and QLFE…HQDP. Over residues 294–306 the composition is skewed to polar residues; it reads TPSTGTRPQSQMS. 7 positions are modified to phosphoserine: Ser-313, Ser-324, Ser-333, Ser-345, Ser-346, Ser-357, and Ser-382. Basic and acidic residues predominate over residues 326–343; it reads ELREAVGSKEAEEPKDLE. Positions 384-395 are enriched in low complexity; sequence GVAAVSSESVPA.

This sequence belongs to the CENP-T/CNN1 family. In terms of assembly, component of the CENPA-CAD complex, composed of CENPI, CENPK, CENPL, CENPO, CENPP, CENPQ, CENPR and CENPS. The CENPA-CAD complex is probably recruited on centromeres by the CENPA-NAC complex, at least composed of CENPA, CENPC, CENPH, CENPM, CENPN, CENPT and CENPU. Identified in a centromeric complex containing histones H2A, H2B, H3 and H4, and at least CENPA, CENPB, CENPC, CENPT, CENPN, HJURP, SUPT16H, SSRP1 and RSF1. Interacts (via N-terminus) with the NDC80 complex. Heterodimer with CENPW; this dimer coassembles with CENPS-CENPX heterodimers at centromeres to form the tetrameric CENP-T-W-S-X complex. In terms of processing, dynamically phosphorylated during the cell cycle. Phosphorylated during G2 phase, metaphase and anaphase, but not during telophase or G1 phase.

It is found in the nucleus. The protein localises to the chromosome. Its subcellular location is the centromere. The protein resides in the kinetochore. Functionally, component of the CENPA-NAC (nucleosome-associated) complex, a complex that plays a central role in assembly of kinetochore proteins, mitotic progression and chromosome segregation. The CENPA-NAC complex recruits the CENPA-CAD (nucleosome distal) complex and may be involved in incorporation of newly synthesized CENPA into centromeres. Part of a nucleosome-associated complex that binds specifically to histone H3-containing nucleosomes at the centromere, as opposed to nucleosomes containing CENPA. Component of the heterotetrameric CENP-T-W-S-X complex that binds and supercoils DNA, and plays an important role in kinetochore assembly. CENPT has a fundamental role in kinetochore assembly and function. It is one of the inner kinetochore proteins, with most further proteins binding downstream. Required for normal chromosome organization and normal progress through mitosis. The chain is Centromere protein T (Cenpt) from Rattus norvegicus (Rat).